Here is a 562-residue protein sequence, read N- to C-terminus: NAD-dependent malic enzyme (562 aa).

Tyr-101 (proton donor) is an active-site residue. NAD(+) is bound at residue Arg-154. Lys-172 (proton acceptor) is an active-site residue. A divalent metal cation is bound by residues Glu-243, Asp-244, and Asp-267. NAD(+) is bound by residues Asp-267 and Asn-415.

This sequence belongs to the malic enzymes family. In terms of assembly, homotetramer. It depends on Mg(2+) as a cofactor. Mn(2+) serves as cofactor.

The enzyme catalyses (S)-malate + NAD(+) = pyruvate + CO2 + NADH. It carries out the reaction oxaloacetate + H(+) = pyruvate + CO2. This Shewanella loihica (strain ATCC BAA-1088 / PV-4) protein is NAD-dependent malic enzyme.